Consider the following 419-residue polypeptide: 3-isopropylmalate dehydratase large subunit (419 aa).

Positions 300, 360, and 363 each coordinate [4Fe-4S] cluster.

The protein belongs to the aconitase/IPM isomerase family. LeuC type 2 subfamily. Heterodimer of LeuC and LeuD. [4Fe-4S] cluster is required as a cofactor.

The enzyme catalyses (2R,3S)-3-isopropylmalate = (2S)-2-isopropylmalate. It functions in the pathway amino-acid biosynthesis; L-leucine biosynthesis; L-leucine from 3-methyl-2-oxobutanoate: step 2/4. Functionally, catalyzes the isomerization between 2-isopropylmalate and 3-isopropylmalate, via the formation of 2-isopropylmaleate. The protein is 3-isopropylmalate dehydratase large subunit of Clostridium botulinum (strain Eklund 17B / Type B).